The chain runs to 278 residues: Phosphate import ATP-binding protein PstB (278 aa).

In terms of domain architecture, ABC transporter spans 32-273; the sequence is YETRDLNLWY…PSDKRTEDYI (242 aa). 64-71 provides a ligand contact to ATP; the sequence is GPSGCGKS.

Belongs to the ABC transporter superfamily. Phosphate importer (TC 3.A.1.7) family. The complex is composed of two ATP-binding proteins (PstB), two transmembrane proteins (PstC and PstA) and a solute-binding protein (PstS).

The protein resides in the cell membrane. It catalyses the reaction phosphate(out) + ATP + H2O = ADP + 2 phosphate(in) + H(+). Part of the ABC transporter complex PstSACB involved in phosphate import. Responsible for energy coupling to the transport system. In Halalkalibacterium halodurans (strain ATCC BAA-125 / DSM 18197 / FERM 7344 / JCM 9153 / C-125) (Bacillus halodurans), this protein is Phosphate import ATP-binding protein PstB.